The chain runs to 417 residues: Lactose permease (417 aa).

M1 is subject to N-formylmethionine; partial. Topologically, residues 1 to 7 (MYYLKNT) are cytoplasmic. Residues 8–34 (NFWMFGLFFFFYFFIMGAYFPFFPIWL) traverse the membrane as a helical segment. Residues 35–41 (HDINHIS) are Periplasmic-facing. The helical transmembrane segment at 42-70 (KSDTGIIFAAISLFSLLFQPLFGLLSDKL) threads the bilayer. The Cytoplasmic segment spans residues 71-74 (GLRK). Residues 75–100 (YLLWIITGMLVMFAPFFIFIFGPLLQ) form a helical membrane-spanning segment. The Periplasmic portion of the chain corresponds to 101–104 (YNIL). A helical membrane pass occupies residues 105-129 (VGSIVGGIYLGFCFNAGAPAVEAFI). Over 130–140 (EKVSRRSNFEF) the chain is Cytoplasmic. A helical transmembrane segment spans residues 141–163 (GRARMFGCVGWALCASIVGIMFT). Over 164 to 166 (INN) the chain is Periplasmic. Residues 167–186 (QFVFWLGSGCALILAVLLFF) traverse the membrane as a helical segment. At 187–220 (AKTDAPSSATVANAVGANHSAFSLKLALELFRQP) the chain is on the cytoplasmic side. The helical transmembrane segment at 221–249 (KLWFLSLYVIGVSCTYDVFDQQFANFFTS) threads the bilayer. The Periplasmic portion of the chain corresponds to 250–253 (FFAT). A helical membrane pass occupies residues 254 to 278 (GEQGTRVFGYVTTMGELLNASIMFF). The Cytoplasmic portion of the chain corresponds to 279-288 (APLIINRIGG). A helical membrane pass occupies residues 289 to 308 (KNALLLAGTIMSVRIIGSSF). Residues 309–311 (ATS) lie on the Periplasmic side of the membrane. Residues 312-334 (ALEVVILKTLHMFEVPFLLVGCF) traverse the membrane as a helical segment. At 335–346 (KYITSQFEVRFS) the chain is on the cytoplasmic side. The chain crosses the membrane as a helical span at residues 347 to 374 (ATIYLVCFCFFKQLAMIFMSVLAGNMYE). Topologically, residues 375-377 (SIG) are periplasmic. The chain crosses the membrane as a helical span at residues 378–398 (FQGAYLVLGLVALGFTLISVF). Residues 399–417 (TLSGPGPLSLLRRQVNEVA) lie on the Cytoplasmic side of the membrane.

As to quaternary structure, monomer.

Its subcellular location is the cell inner membrane. The catalysed reaction is lactose(in) + H(+)(in) = lactose(out) + H(+)(out). The enzyme catalyses melibiose(in) + H(+)(in) = melibiose(out) + H(+)(out). Inhibited by the proton ionophore carbonyl cyanide m-chlorophenylhydrazone (CCCP). Responsible for transport of beta-galactosides into the cell, with the concomitant import of a proton (symport system). Can transport lactose, melibiose, the synthetic disaccharide lactulose or the analog methyl-1-thio-beta,D-galactopyranoside (TMG), but not sucrose or fructose. The substrate specificity is directed toward the galactopyranosyl moiety of the substrate. This Escherichia coli (strain K12) protein is Lactose permease.